The sequence spans 238 residues: Large ribosomal subunit protein uL1 (238 aa).

This sequence belongs to the universal ribosomal protein uL1 family. As to quaternary structure, part of the 50S ribosomal subunit.

Functionally, binds directly to 23S rRNA. The L1 stalk is quite mobile in the ribosome, and is involved in E site tRNA release. Its function is as follows. Protein L1 is also a translational repressor protein, it controls the translation of the L11 operon by binding to its mRNA. This Trichodesmium erythraeum (strain IMS101) protein is Large ribosomal subunit protein uL1.